The sequence spans 379 residues: Cytochrome b (379 aa).

The next 4 membrane-spanning stretches (helical) occupy residues 33 to 53 (FGSL…FLAM), 77 to 98 (WTIR…FIHV), 113 to 133 (WNVG…GYVL), and 178 to 198 (FFAL…IHLL). Residues H83 and H97 each contribute to the heme b site. H182 and H196 together coordinate heme b. H201 serves as a coordination point for a ubiquinone. Transmembrane regions (helical) follow at residues 226-246 (TKDF…ALFY), 288-308 (LGGV…PFLQ), 320-340 (LSQF…WIGG), and 347-367 (FINI…FIMP).

It belongs to the cytochrome b family. In terms of assembly, the cytochrome bc1 complex contains 11 subunits: 3 respiratory subunits (MT-CYB, CYC1 and UQCRFS1), 2 core proteins (UQCRC1 and UQCRC2) and 6 low-molecular weight proteins (UQCRH/QCR6, UQCRB/QCR7, UQCRQ/QCR8, UQCR10/QCR9, UQCR11/QCR10 and a cleavage product of UQCRFS1). This cytochrome bc1 complex then forms a dimer. Requires heme b as cofactor.

Its subcellular location is the mitochondrion inner membrane. Component of the ubiquinol-cytochrome c reductase complex (complex III or cytochrome b-c1 complex) that is part of the mitochondrial respiratory chain. The b-c1 complex mediates electron transfer from ubiquinol to cytochrome c. Contributes to the generation of a proton gradient across the mitochondrial membrane that is then used for ATP synthesis. The sequence is that of Cytochrome b (MT-CYB) from Lepilemur sahamalazensis (Sahamalaza sportive lemur).